The sequence spans 487 residues: MPRARWLQSAALMGALAVVLITAAPVAADAYQVPAPPSPTASCDVISPVAIPCVALGKFADAVAAECRRVGVPDARCVLPLAHRVTQAARDAYLQSWVHRTARFQDALQDPVPLRETQWLGTHNSFNSLSDSFTVSHADSNQQLSLAQQLDIDVRALELDLHYLPRLEGHGAPGVTVCHGLGPKNANLGCTVEPLLATVLPQIANWLNAPGHTEEVILLYLEDQLKNASAYESVVATLDQVLRRADGTSLIYRPNPARRATNGCVPLPLDVSREEIRASGARAVLVGSCAPGWSAAVFDWSGVELESGSNSGYRPYPACDATYGRGVYAWRLVRYYEDSTLATALANPTRPPANPQALTPPKVPAMTDCGVNLFGFDQLLPEDGRIQASLWSWAPDEPRAGAGACALQGADGRWVAASCGDPHPAACRDAAGRWTVTPAPVVFAGAALACTAIGADFTLPRTGNQNARLHAVAGPAGGAWVHYLLPP.

3 helical membrane passes run 10–30 (AALM…AADA), 45–65 (VISP…AVAA), and 439–459 (APVV…DFTL).

The protein localises to the cell membrane. This is an uncharacterized protein from Mycobacterium tuberculosis (strain CDC 1551 / Oshkosh).